A 123-amino-acid polypeptide reads, in one-letter code: Large ribosomal subunit protein uL14 (123 aa).

It belongs to the universal ribosomal protein uL14 family. In terms of assembly, part of the 50S ribosomal subunit. Forms a cluster with proteins L3 and L19. In the 70S ribosome, L14 and L19 interact and together make contacts with the 16S rRNA in bridges B5 and B8.

Functionally, binds to 23S rRNA. Forms part of two intersubunit bridges in the 70S ribosome. The chain is Large ribosomal subunit protein uL14 from Aliivibrio salmonicida (strain LFI1238) (Vibrio salmonicida (strain LFI1238)).